Consider the following 445-residue polypeptide: 3-phosphoshikimate 1-carboxyvinyltransferase (445 aa).

Residues 1–20 (MSTSAAPTPLESRASGPLSG) are disordered. 3-phosphoshikimate is bound by residues Lys28, Ser29, and Arg33. Position 28 (Lys28) interacts with phosphoenolpyruvate. The phosphoenolpyruvate site is built by Gly101 and Arg129. Ser175, Gln177, Asp328, and Lys355 together coordinate 3-phosphoshikimate. Residue Gln177 coordinates phosphoenolpyruvate. The active-site Proton acceptor is the Asp328. The phosphoenolpyruvate site is built by Arg359 and Arg402.

The protein belongs to the EPSP synthase family. As to quaternary structure, monomer.

It localises to the cytoplasm. The catalysed reaction is 3-phosphoshikimate + phosphoenolpyruvate = 5-O-(1-carboxyvinyl)-3-phosphoshikimate + phosphate. It functions in the pathway metabolic intermediate biosynthesis; chorismate biosynthesis; chorismate from D-erythrose 4-phosphate and phosphoenolpyruvate: step 6/7. Its function is as follows. Catalyzes the transfer of the enolpyruvyl moiety of phosphoenolpyruvate (PEP) to the 5-hydroxyl of shikimate-3-phosphate (S3P) to produce enolpyruvyl shikimate-3-phosphate and inorganic phosphate. This is 3-phosphoshikimate 1-carboxyvinyltransferase from Bradyrhizobium sp. (strain ORS 278).